The sequence spans 93 residues: DNA-directed RNA polymerase subunit omega (93 aa).

It belongs to the RNA polymerase subunit omega family. In terms of assembly, the RNAP catalytic core consists of 2 alpha, 1 beta, 1 beta' and 1 omega subunit. When a sigma factor is associated with the core the holoenzyme is formed, which can initiate transcription.

The enzyme catalyses RNA(n) + a ribonucleoside 5'-triphosphate = RNA(n+1) + diphosphate. Its function is as follows. Promotes RNA polymerase assembly. Latches the N- and C-terminal regions of the beta' subunit thereby facilitating its interaction with the beta and alpha subunits. The protein is DNA-directed RNA polymerase subunit omega of Acinetobacter baylyi (strain ATCC 33305 / BD413 / ADP1).